Reading from the N-terminus, the 77-residue chain is Serine protease inhibitor 2 (77 aa).

Residues 1–17 (MMFTPLIVLTLLVLATA) form the signal peptide. 5 disulfides stabilise this stretch: Cys21–Cys53, Cys30–Cys48, Cys33–Cys44, Cys37–Cys74, and Cys55–Cys68. The TIL domain maps to 21-74 (CGPNEQWSDCPKCELQCGESDKPCATICGEPKCYCSPDKYRRIPDGRCIRKIQC).

It is found in the secreted. Its function is as follows. Defends the organism against the host's proteinases. The chain is Serine protease inhibitor 2 from Anisakis simplex (Herring worm).